The chain runs to 312 residues: DNA-directed RNA polymerase subunit alpha (312 aa).

The alpha N-terminal domain (alpha-NTD) stretch occupies residues 1–225 (MIEFEKPNIT…VEHFKVFESA (225 aa)). Residues 243-312 (KEKKLEMTIE…DLGLSLRQED (70 aa)) are alpha C-terminal domain (alpha-CTD).

It belongs to the RNA polymerase alpha chain family. Homodimer. The RNAP catalytic core consists of 2 alpha, 1 beta, 1 beta' and 1 omega subunit. When a sigma factor is associated with the core the holoenzyme is formed, which can initiate transcription.

The enzyme catalyses RNA(n) + a ribonucleoside 5'-triphosphate = RNA(n+1) + diphosphate. Its function is as follows. DNA-dependent RNA polymerase catalyzes the transcription of DNA into RNA using the four ribonucleoside triphosphates as substrates. This is DNA-directed RNA polymerase subunit alpha from Lactobacillus helveticus (strain DPC 4571).